A 955-amino-acid chain; its full sequence is 2-oxoglutarate dehydrogenase E1 component (955 aa).

Belongs to the alpha-ketoglutarate dehydrogenase family. Homodimer. Part of the 2-oxoglutarate dehydrogenase (OGDH) complex composed of E1 (2-oxoglutarate dehydrogenase), E2 (dihydrolipoamide succinyltransferase) and E3 (dihydrolipoamide dehydrogenase); the complex contains multiple copies of the three enzymatic components (E1, E2 and E3). Requires thiamine diphosphate as cofactor.

The enzyme catalyses N(6)-[(R)-lipoyl]-L-lysyl-[protein] + 2-oxoglutarate + H(+) = N(6)-[(R)-S(8)-succinyldihydrolipoyl]-L-lysyl-[protein] + CO2. In terms of biological role, E1 component of the 2-oxoglutarate dehydrogenase (OGDH) complex which catalyzes the decarboxylation of 2-oxoglutarate, the first step in the conversion of 2-oxoglutarate to succinyl-CoA and CO(2). The chain is 2-oxoglutarate dehydrogenase E1 component from Bacillus cereus (strain ATCC 14579 / DSM 31 / CCUG 7414 / JCM 2152 / NBRC 15305 / NCIMB 9373 / NCTC 2599 / NRRL B-3711).